The primary structure comprises 129 residues: Transcription factor bHLH138 (129 aa).

A compositionally biased stretch (basic and acidic residues) spans 1 to 18 (MERYTKKNERFKAEEGKG). The tract at residues 1–24 (MERYTKKNERFKAEEGKGSKKSRT) is disordered. In terms of domain architecture, bHLH spans 19–68 (SKKSRTFLTERERRALFNDRFFDLKNLIPNPTKGGEASIVQDGIVYINEL).

It belongs to the bHLH protein family.

The protein localises to the nucleus. In Arabidopsis thaliana (Mouse-ear cress), this protein is Transcription factor bHLH138.